Consider the following 185-residue polypeptide: CDP-diacylglycerol--glycerol-3-phosphate 3-phosphatidyltransferase (185 aa).

The next 4 membrane-spanning stretches (helical) occupy residues 7–26, 33–52, 89–108, and 151–172; these read IFLT…AFYL, FITT…DGYL, FWIT…ISAL, and IAAI…IQYL.

The protein belongs to the CDP-alcohol phosphatidyltransferase class-I family.

The protein localises to the cell membrane. It carries out the reaction a CDP-1,2-diacyl-sn-glycerol + sn-glycerol 3-phosphate = a 1,2-diacyl-sn-glycero-3-phospho-(1'-sn-glycero-3'-phosphate) + CMP + H(+). It functions in the pathway phospholipid metabolism; phosphatidylglycerol biosynthesis; phosphatidylglycerol from CDP-diacylglycerol: step 1/2. Functionally, this protein catalyzes the committed step to the synthesis of the acidic phospholipids. This chain is CDP-diacylglycerol--glycerol-3-phosphate 3-phosphatidyltransferase (pgsA), found in Haemophilus influenzae (strain ATCC 51907 / DSM 11121 / KW20 / Rd).